The chain runs to 554 residues: Arginine--tRNA ligase (554 aa).

The short motif at 130–140 (ANPTGDLHIGH) is the 'HIGH' region element.

The protein belongs to the class-I aminoacyl-tRNA synthetase family. Monomer.

Its subcellular location is the cytoplasm. It carries out the reaction tRNA(Arg) + L-arginine + ATP = L-arginyl-tRNA(Arg) + AMP + diphosphate. This is Arginine--tRNA ligase from Staphylococcus carnosus (strain TM300).